The following is a 301-amino-acid chain: Rhodopsin (301 aa).

The Extracellular portion of the chain corresponds to 1–18 (LHMIHLHWYQYPPMNPMM). The helical transmembrane segment at 19 to 43 (YPLLLIFMLFTGILCLAGNFVTIWV) threads the bilayer. At 44-55 (FMNTKSLRTPAN) the chain is on the cytoplasmic side. The chain crosses the membrane as a helical span at residues 56-78 (LLVVNLAMSDFLMMFTMFPPMMV). Residues 79-92 (TCYYHTWTLGPTFC) lie on the Extracellular side of the membrane. Cys-92 and Cys-169 form a disulfide bridge. Residues 93–115 (QVYAFLGNLCGCASIWTMVFITF) form a helical membrane-spanning segment. The 'Ionic lock' involved in activated form stabilization signature appears at 116 to 118 (DRY). At 116 to 134 (DRYNVIVKGVAGEPLSTKK) the chain is on the cytoplasmic side. A helical membrane pass occupies residues 135–155 (ASLWILTIWVLSTTWCIAPFF). Residues 156-182 (GWNHYVPEGNLTGCGTDYLSEDILSRS) are Extracellular-facing. An N-linked (GlcNAc...) asparagine glycan is attached at Asn-165. The helical transmembrane segment at 183-204 (YLYVYSTWVYFLPLAITIYCYV) threads the bilayer. Topologically, residues 205-245 (FIIKAVAAHEKGMRDQAKKMGIKSLRNEEAQKTSAECRLAK) are cytoplasmic. A helical membrane pass occupies residues 246-267 (IAMTTVALWFIAWTPCLLINWV). Over 268-278 (GMFARSYLSPV) the chain is Extracellular. The helical transmembrane segment at 279-300 (YTIWGYVFAKANAVYNPIVYAI) threads the bilayer. Lys-288 is subject to N6-(retinylidene)lysine.

It belongs to the G-protein coupled receptor 1 family. Opsin subfamily. In terms of assembly, homodimer. Interacts with GNAQ. In terms of processing, contains one covalently linked retinal chromophore.

It localises to the cell projection. The protein localises to the rhabdomere membrane. In terms of biological role, photoreceptor required for image-forming vision at low light intensity. Can use both retinal and 3-dehydroretinal as visual pigment. Light-induced isomerization of 11-cis to all-trans retinal triggers a conformational change that activates signaling via G-proteins. Signaling via GNAQ probably mediates the activation of phospholipase C. In Procambarus seminolae (Crayfish), this protein is Rhodopsin (RHO).